We begin with the raw amino-acid sequence, 612 residues long: Peroxisomal carnitine O-octanoyltransferase (612 aa).

Met-1 bears the N-acetylmethionine mark. 2 positions are modified to N6-succinyllysine: Lys-40 and Lys-57. The active-site Proton acceptor is His-327. Residues Lys-406 and 410 to 417 (KEKQLHPD) contribute to the CoA site. Lys-406 is subject to N6-acetyllysine; alternate. Lys-406 bears the N6-succinyllysine; alternate mark. (R)-carnitine contacts are provided by Tyr-439, Thr-441, and Thr-452. The Microbody targeting signal motif lies at 610 to 612 (PHL).

It belongs to the carnitine/choline acetyltransferase family. As to quaternary structure, monomer.

The protein resides in the peroxisome. It carries out the reaction octanoyl-CoA + (R)-carnitine = O-octanoyl-(R)-carnitine + CoA. It catalyses the reaction 4,8-dimethylnonanoyl-CoA + (R)-carnitine = O-4,8-dimethylnonanoyl-(R)-carnitine + CoA. Its pathway is lipid metabolism; fatty acid beta-oxidation. Functionally, beta-oxidation of fatty acids. The highest activity concerns the C6 to C10 chain length substrate. The protein is Peroxisomal carnitine O-octanoyltransferase (CROT) of Bos taurus (Bovine).